Here is a 188-residue protein sequence, read N- to C-terminus: Acireductone dioxygenase (188 aa).

Positions 97, 99, 103, and 141 each coordinate Fe(2+). 4 residues coordinate Ni(2+): H97, H99, E103, and H141.

Belongs to the acireductone dioxygenase (ARD) family. In terms of assembly, monomer. The cofactor is Fe(2+). It depends on Ni(2+) as a cofactor.

The catalysed reaction is 1,2-dihydroxy-5-(methylsulfanyl)pent-1-en-3-one + O2 = 3-(methylsulfanyl)propanoate + CO + formate + 2 H(+). The enzyme catalyses 1,2-dihydroxy-5-(methylsulfanyl)pent-1-en-3-one + O2 = 4-methylsulfanyl-2-oxobutanoate + formate + 2 H(+). The protein operates within amino-acid biosynthesis; L-methionine biosynthesis via salvage pathway; L-methionine from S-methyl-5-thio-alpha-D-ribose 1-phosphate: step 5/6. In terms of biological role, catalyzes 2 different reactions between oxygen and the acireductone 1,2-dihydroxy-3-keto-5-methylthiopentene (DHK-MTPene) depending upon the metal bound in the active site. Fe-containing acireductone dioxygenase (Fe-ARD) produces formate and 2-keto-4-methylthiobutyrate (KMTB), the alpha-ketoacid precursor of methionine in the methionine recycle pathway. Ni-containing acireductone dioxygenase (Ni-ARD) produces methylthiopropionate, carbon monoxide and formate, and does not lie on the methionine recycle pathway. This is Acireductone dioxygenase from Xylella fastidiosa (strain M12).